The following is a 102-amino-acid chain: Protein V2 (102 aa).

In terms of biological role, may be involved in the regulation of ssDNA versus dsDNA levels. In Beet curly top virus (strain California/Logan) (BCTV), this protein is Protein V2.